We begin with the raw amino-acid sequence, 330 residues long: Probable aldo-keto reductase 6 (330 aa).

The Proton donor role is filled by tyrosine 64. Histidine 132 provides a ligand contact to substrate. Residue 211–221 participates in NADP(+) binding; the sequence is SPLGRGFLGLP.

This sequence belongs to the aldo/keto reductase family.

In Arabidopsis thaliana (Mouse-ear cress), this protein is Probable aldo-keto reductase 6.